Here is a 220-residue protein sequence, read N- to C-terminus: ATP synthase subunit 5, mitochondrial (220 aa).

It belongs to the ATPase delta chain family. F-type ATPases have 2 components, CF(1) - the catalytic core - and CF(0) - the membrane proton channel. CF(1) has five subunits: alpha(3), beta(3), gamma(1), delta(1), epsilon(1). CF(0) has three main subunits: a, b and c.

The protein resides in the mitochondrion. It localises to the mitochondrion inner membrane. Its function is as follows. Mitochondrial membrane ATP synthase (F(1)F(0) ATP synthase or Complex V) produces ATP from ADP in the presence of a proton gradient across the membrane which is generated by electron transport complexes of the respiratory chain. F-type ATPases consist of two structural domains, F(1) - containing the extramembraneous catalytic core and F(0) - containing the membrane proton channel, linked together by a central stalk and a peripheral stalk. During catalysis, ATP synthesis in the catalytic domain of F(1) is coupled via a rotary mechanism of the central stalk subunits to proton translocation. Part of the complex F(0) domain and the peripheric stalk, which acts as a stator to hold the catalytic alpha(3)beta(3) subcomplex and subunit a/ATP6 static relative to the rotary elements. The sequence is that of ATP synthase subunit 5, mitochondrial (atp-5) from Neurospora crassa (strain ATCC 24698 / 74-OR23-1A / CBS 708.71 / DSM 1257 / FGSC 987).